The primary structure comprises 191 residues: MNREEIIDIFTKTGAMLSGHFRLTSGKHSNRYFQCAQVLQHPQYTQKLCQELANRFENQGVQTVIGPAMGGILVSYEVARSLGVRSLFTERENGKMSLRRSFSLQPGEKVLVVEDVITTGGSVAEVIEVVKSLGGEVVGVGVLVDRSNGKANLGVRTEALLTVSVETYDPDNCPLCDQGLPAVKPGSRQIT.

5-phospho-alpha-D-ribose 1-diphosphate is bound at residue 114-122 (EDVITTGGS). Orotate-binding residues include Thr118 and Arg146.

It belongs to the purine/pyrimidine phosphoribosyltransferase family. PyrE subfamily. As to quaternary structure, homodimer. Requires Mg(2+) as cofactor.

It carries out the reaction orotidine 5'-phosphate + diphosphate = orotate + 5-phospho-alpha-D-ribose 1-diphosphate. Its pathway is pyrimidine metabolism; UMP biosynthesis via de novo pathway; UMP from orotate: step 1/2. Its function is as follows. Catalyzes the transfer of a ribosyl phosphate group from 5-phosphoribose 1-diphosphate to orotate, leading to the formation of orotidine monophosphate (OMP). The sequence is that of Orotate phosphoribosyltransferase from Desulforamulus reducens (strain ATCC BAA-1160 / DSM 100696 / MI-1) (Desulfotomaculum reducens).